The following is a 769-amino-acid chain: DNA helicase/primase complex-associated protein (769 aa).

This sequence belongs to the herpesviridae HEPA family. Associates with the primase and the helicase to form the helicase-primase complex. Interacts with the origin-binding protein. Interacts with the polymerase catalytic subunit.

Its subcellular location is the host nucleus. Functionally, component of the helicase/primase complex. Unwinds the DNA at the replication forks and generates single-stranded DNA for both leading and lagging strand synthesis. The primase synthesizes short RNA primers on the lagging strand that the polymerase presumably elongates using dNTPs. The primase-associated factor has no known catalytic activity in the complex and may serve to facilitate the formation of the replisome by directly interacting with the origin-binding protein and the polymerase. The polypeptide is DNA helicase/primase complex-associated protein (MDV020) (Gallus gallus (Chicken)).